The primary structure comprises 179 residues: Large ribosomal subunit protein uL6 (179 aa).

The protein belongs to the universal ribosomal protein uL6 family. In terms of assembly, part of the 50S ribosomal subunit.

Functionally, this protein binds to the 23S rRNA, and is important in its secondary structure. It is located near the subunit interface in the base of the L7/L12 stalk, and near the tRNA binding site of the peptidyltransferase center. This Alkaliphilus metalliredigens (strain QYMF) protein is Large ribosomal subunit protein uL6.